A 663-amino-acid polypeptide reads, in one-letter code: UvrABC system protein B (663 aa).

The Helicase ATP-binding domain maps to 31 to 418 (DNIEGGEKAQ…TDTVVEQIIR (388 aa)). 44 to 51 (GATGTGKT) provides a ligand contact to ATP. Residues 97-120 (YYDYYQPEAYVPSSDTYIEKDSSV) carry the Beta-hairpin motif. Positions 435–601 (QMDDLLGEIN…TIKKEIRDLI (167 aa)) constitute a Helicase C-terminal domain. Residues 627-662 (QAEIKALQQQMQEAAELLDFELAAQIRDVILELKAI) enclose the UVR domain.

This sequence belongs to the UvrB family. In terms of assembly, forms a heterotetramer with UvrA during the search for lesions. Interacts with UvrC in an incision complex.

Its subcellular location is the cytoplasm. The UvrABC repair system catalyzes the recognition and processing of DNA lesions. A damage recognition complex composed of 2 UvrA and 2 UvrB subunits scans DNA for abnormalities. Upon binding of the UvrA(2)B(2) complex to a putative damaged site, the DNA wraps around one UvrB monomer. DNA wrap is dependent on ATP binding by UvrB and probably causes local melting of the DNA helix, facilitating insertion of UvrB beta-hairpin between the DNA strands. Then UvrB probes one DNA strand for the presence of a lesion. If a lesion is found the UvrA subunits dissociate and the UvrB-DNA preincision complex is formed. This complex is subsequently bound by UvrC and the second UvrB is released. If no lesion is found, the DNA wraps around the other UvrB subunit that will check the other stand for damage. The chain is UvrABC system protein B from Streptococcus agalactiae serotype III (strain NEM316).